We begin with the raw amino-acid sequence, 156 residues long: Arginine repressor (156 aa).

Belongs to the ArgR family.

The protein localises to the cytoplasm. Its pathway is amino-acid biosynthesis; L-arginine biosynthesis [regulation]. Regulates arginine biosynthesis genes. In Shewanella putrefaciens (strain CN-32 / ATCC BAA-453), this protein is Arginine repressor.